The chain runs to 378 residues: MKILVDENMPYARELFSRLGEVKAVPGRPIPVEELNHADALMVRSVTKVNESLLSGTPINFVGTATAGTDHVDEAWLKQAGIGFSAAPGCNAIAVVEYVFSALLMLAERDGFSLRDRTIGIVGVGNVGSRLQTRLEALGIRTLLCDPPRAARGDEGDFRTLDELVQEADVLTFHTPLYKDGPYKTLHLADETLIRRLKPGAILINACRGPVVDNAALLARLNAGQPLSVVLDVWEGEPDLNVALLEAVDIGTSHIAGYTLEGKARGTTQVFEAYSAFIGREQHVALETLLPAPEFGRITLHGPLDQPTLKRLAHLVYDVRRDDAPLRKVAGIPGEFDKLRKNYLERREWSSLYVMCDDETAAALLCKLGFNAVHHPAH.

Residues serine 45 and threonine 66 each contribute to the substrate site. NAD(+) contacts are provided by aspartate 146 and threonine 175. Residue arginine 208 is part of the active site. Aspartate 232 lines the NAD(+) pocket. Glutamate 237 is an active-site residue. Residue histidine 254 is the Proton donor of the active site. Glycine 257 provides a ligand contact to NAD(+). Tyrosine 258 serves as a coordination point for substrate.

This sequence belongs to the D-isomer specific 2-hydroxyacid dehydrogenase family. PdxB subfamily. Homodimer.

The protein resides in the cytoplasm. It catalyses the reaction 4-phospho-D-erythronate + NAD(+) = (R)-3-hydroxy-2-oxo-4-phosphooxybutanoate + NADH + H(+). It participates in cofactor biosynthesis; pyridoxine 5'-phosphate biosynthesis; pyridoxine 5'-phosphate from D-erythrose 4-phosphate: step 2/5. In terms of biological role, catalyzes the oxidation of erythronate-4-phosphate to 3-hydroxy-2-oxo-4-phosphonooxybutanoate. The protein is Erythronate-4-phosphate dehydrogenase of Salmonella dublin (strain CT_02021853).